The sequence spans 1453 residues: Collagen alpha-1(I) chain (1453 aa).

An N-terminal signal peptide occupies residues 1 to 22 (MFSFVDLRLLLLLGATALLTHG). A propeptide spans 23–151 (QEDIPEVSCI…PPGLGGNFAS (129 aa)) (N-terminal propeptide). The VWFC domain maps to 29–87 (VSCIHNGLRVPNGETWKPDVCLICICHNGTAVCDGVLCKEDLDCPNPQKREGECCPFCP). Asparagine 56 carries N-linked (GlcNAc...) asparagine glycosylation. A disordered region spans residues 97 to 1206 (VIGVEGPKGD…KSQDGGRYYR (1110 aa)). Pro residues-rich tracts occupy residues 109 to 118 (PQGPRGPVGP) and 128 to 143 (PGLP…PGPP). Glutamine 152 is subject to Pyrrolidone carboxylic acid. The segment at 152–167 (QMSYGYDEKSAGVSVP) is nonhelical region (N-terminal). Lysine 160 carries the allysine modification. Serine 161 carries the post-translational modification Phosphoserine. Residues 168 to 1181 (GPMGPSGPRG…PGPPGPPGPP (1014 aa)) form a triple-helical region region. 11 positions are modified to 4-hydroxyproline: proline 179, proline 182, proline 185, proline 194, proline 197, proline 200, proline 215, proline 230, proline 236, proline 245, and proline 251. Residues 187-206 (PQGFQGPPGEPGEPGASGPM) are compositionally biased toward low complexity. Positions 218–232 (NGDDGEAGKPGRPGE) are enriched in basic and acidic residues. Lysine 254 is modified (5-hydroxylysine; alternate). Residue lysine 254 is glycosylated (O-linked (Gal...) hydroxylysine; alternate). Serine 260 carries the phosphoserine modification. Residues proline 278, proline 281, proline 287, proline 296, and proline 302 each carry the 4-hydroxyproline modification. The span at 307–320 (SAGARGNDGAVGAA) shows a compositional bias: low complexity. The segment covering 322-334 (PPGPTGPTGPPGF) has biased composition (pro residues). A 4-hydroxyproline mark is found at proline 323, proline 332, proline 335, proline 362, proline 365, proline 377, proline 383, proline 392, proline 398, proline 401, and proline 416. Low complexity predominate over residues 335–361 (PGAAGAKGEAGPQGARGSEGPQGVRGE). Residues 368–418 (AGAAGPAGNPGADGQPGAKGANGAPGIAGAPGFPGARGPSGPQGPSGAPGP) show a composition bias toward low complexity. Residue lysine 419 is modified to 5-hydroxylysine. A 4-hydroxyproline mark is found at proline 425, proline 428, proline 440, proline 449, proline 464, proline 470, proline 479, and proline 485. Positions 474-483 (GERGGPGSRG) are enriched in gly residues. At lysine 494 the chain carries 5-hydroxylysine. 4-hydroxyproline occurs at positions 503, 512, 518, 524, 533, 536, 545, 554, 560, 572, 581, 590, 593, 611, 629, 635, 641, 647, 653, 659, 671, 680, 692, 704, 707, 713, 719, and 728. Residues 527–566 (KGLTGSPGSPGPDGKTGPPGPAGQDGRPGPAGPPGARGQA) show a composition bias toward low complexity. The span at 623–650 (QGPAGSPGFQGLPGPAGPPGEAGKPGEQ) shows a compositional bias: low complexity. Low complexity-rich tracts occupy residues 685 to 695 (PRGNNGAPGND) and 703 to 716 (APGA…PGLQ). The short motif at 734–736 (RGD) is the Cell attachment site element. 5-hydroxylysine is present on lysine 740. 4-hydroxyproline is present on residues proline 746, proline 761, and proline 767. Positions 773-787 (TGPSGPAGPTGARGA) are enriched in low complexity. Position 776 is a phosphoserine (serine 776). Residues proline 788, proline 794, proline 797, proline 806, proline 812, proline 830, proline 839, and proline 848 each carry the 4-hydroxyproline modification. Over residues 800-815 (AGFAGPPGADGQPGAK) the composition is skewed to low complexity. The segment covering 829-841 (PPGPAGPAGPPGP) has biased composition (pro residues). Residues 842–872 (IGNVGAPGPKGSRGAAGPPGATGFPGAAGRV) are compositionally biased toward low complexity. Residue lysine 851 is modified to 5-hydroxylysine. Proline 860 and proline 866 each carry 4-hydroxyproline. At proline 874 the chain carries 3-hydroxyproline. 16 positions are modified to 4-hydroxyproline: proline 875, proline 884, proline 887, proline 908, proline 917, proline 926, proline 935, proline 953, proline 962, proline 965, proline 971, proline 986, proline 992, proline 998, proline 1007, and proline 1013. Residues 901-910 (ETGPAGRPGE) are compositionally biased toward low complexity. The span at 920–935 (AGEKGSPGADGPAGSP) shows a compositional bias: low complexity. Pro residues predominate over residues 985–995 (PPGPMGPPGLA). Residues 997 to 1012 (PPGESGREGSPGAEGS) are compositionally biased toward low complexity. 5-hydroxylysine is present on lysine 1022. Over residues 1031-1046 (AGPPGAPGAPGAPGPV) the composition is skewed to pro residues. A 4-hydroxyproline mark is found at proline 1034, proline 1037, and proline 1040. Over residues 1067–1081 (IGPAGARGPAGPQGP) the composition is skewed to low complexity. Residues 1082-1084 (RGD) carry the Cell attachment site motif. Basic and acidic residues predominate over residues 1082–1096 (RGDKGETGEQGDRGI). A 5-hydroxylysine modification is found at lysine 1085. Position 1097 is a 5-hydroxylysine; alternate (lysine 1097). O-linked (Gal...) hydroxylysine; alternate glycosylation occurs at lysine 1097. The span at 1102–1148 (FSGLQGPPGSPGSPGEQGPSGASGPAGPRGPPGSAGSPGKDGLNGLP) shows a compositional bias: low complexity. 5 positions are modified to 4-hydroxyproline: proline 1109, proline 1112, proline 1115, proline 1133, and proline 1148. Proline 1153 is modified (3-hydroxyproline). The residue at position 1154 (proline 1154) is a 4-hydroxyproline. Residues 1166–1181 (AGPPGPPGPPGPPGPP) are compositionally biased toward pro residues. Proline 1168 carries the post-translational modification 3-hydroxyproline. The residue at position 1169 (proline 1169) is a 4-hydroxyproline. Proline 1171 carries the post-translational modification 3-hydroxyproline. Proline 1172 carries the post-translational modification 4-hydroxyproline. Position 1174 is a 3-hydroxyproline (proline 1174). 3 positions are modified to 4-hydroxyproline: proline 1175, proline 1178, and proline 1181. The major antigenic determinant (of neutral salt-extracted rat skin collagen) stretch occupies residues 1176–1186 (GPPGPPSGGYD). The interval 1182–1207 (SGGYDFSFLPQPPQEKSQDGGRYYRA) is nonhelical region (C-terminal). Lysine 1197 carries the allysine modification. Basic and acidic residues predominate over residues 1197 to 1206 (KSQDGGRYYR). The propeptide at 1208 to 1453 (DDANVVRDRD…GMDIGPACFV (246 aa)) is C-terminal propeptide. The 236-residue stretch at 1218 to 1453 (LEVDTTLKSL…GMDIGPACFV (236 aa)) folds into the Fibrillar collagen NC1 domain. 3 disulfides stabilise this stretch: cysteine 1248-cysteine 1280, cysteine 1288-cysteine 1451, and cysteine 1359-cysteine 1404. Aspartate 1266, asparagine 1268, glutamine 1269, cysteine 1271, and aspartate 1274 together coordinate Ca(2+). The N-linked (GlcNAc...) asparagine glycan is linked to asparagine 1354.

Belongs to the fibrillar collagen family. As to quaternary structure, trimers of one alpha 2(I) and two alpha 1(I) chains. Interacts with MRC2. Interacts with TRAM2. Interacts with MFAP4 in a Ca (2+)-dependent manner. Post-translationally, contains mostly 4-hydroxyproline. Proline residues at the third position of the tripeptide repeating unit (G-X-Y) are hydroxylated in some or all of the chains. In terms of processing, contains 3-hydroxyproline at a few sites. This modification occurs on the first proline residue in the sequence motif Gly-Pro-Hyp, where Hyp is 4-hydroxyproline. Lysine residues at the third position of the tripeptide repeating unit (G-X-Y) are 5-hydroxylated in some or all of the chains. Post-translationally, O-glycosylated on hydroxylated lysine residues. The O-linked glycan consists of a Glc-Gal disaccharide. As to expression, forms the fibrils of tendon, ligaments and bones. In bones the fibrils are mineralized with calcium hydroxyapatite.

The protein resides in the secreted. It localises to the extracellular space. Its subcellular location is the extracellular matrix. In terms of biological role, type I collagen is a member of group I collagen (fibrillar forming collagen). This chain is Collagen alpha-1(I) chain (Col1a1), found in Rattus norvegicus (Rat).